The primary structure comprises 579 residues: XK-related protein 7 (579 aa).

Low complexity predominate over residues 1-18 (MAAKSDGAAASAGPDPEG). The tract at residues 1 to 40 (MAAKSDGAAASAGPDPEGAAGGARGSAGGRGEAAAAAGPP) is disordered. Residues 19–31 (AAGGARGSAGGRG) show a composition bias toward gly residues. 2 consecutive transmembrane segments (helical) span residues 59–79 (WVLC…WLAA) and 89–109 (YFSL…LLSF). Residues 146-165 (GAFRTKEGSPEPGPQPAPSS) form a disordered region. 5 helical membrane-spanning segments follow: residues 260–280 (LLPA…LASY), 314–334 (GLAF…CIVG), 355–375 (GEEI…WFNV), 384–404 (MTLY…FWYS), and 415–435 (LIMV…MCVY). The interval 466–510 (ADAITSPPRSLPRTTGAERDGASAGERAGTPTPPVFQVRPGLPPT) is disordered.

The protein belongs to the XK family.

It is found in the cell membrane. The polypeptide is XK-related protein 7 (XKR7) (Pan troglodytes (Chimpanzee)).